A 509-amino-acid polypeptide reads, in one-letter code: 2,3-bisphosphoglycerate-independent phosphoglycerate mutase (509 aa).

Residue Asp-11 participates in Mn(2+) binding. Phosphotyrosine is present on Tyr-35. A Mn(2+)-binding site is contributed by Ser-61. The active-site Phosphoserine intermediate is Ser-61. Residues His-122, 152 to 153, Arg-184, Arg-190, 260 to 263, and Lys-335 each bind substrate; these read RD and RPDR. Mn(2+)-binding residues include Asp-402, His-406, Asp-443, His-444, and His-461.

Belongs to the BPG-independent phosphoglycerate mutase family. Monomer. Requires Mn(2+) as cofactor.

It catalyses the reaction (2R)-2-phosphoglycerate = (2R)-3-phosphoglycerate. It participates in carbohydrate degradation; glycolysis; pyruvate from D-glyceraldehyde 3-phosphate: step 3/5. Its function is as follows. Essential for rapid growth and for sporulation. Catalyzes the interconversion of 2-phosphoglycerate and 3-phosphoglycerate. The sequence is that of 2,3-bisphosphoglycerate-independent phosphoglycerate mutase from Bacillus anthracis.